The chain runs to 83 residues: Protein ORF5 (83 aa).

This sequence belongs to the microviridae C protein family.

Functionally, plays a central role in the packaging of viral DNA into phage procapsid, which occurs in the late stage of infection. Can interact with the replicative complex after the completion of one round of DNA synthesis. When protein ORF5 is bound to the replicative form, the complex becomes accessible to procapsid and serves as a DNA packaging apparatus. The protein is Protein ORF5 of Spiroplasma melliferum (SpV4).